We begin with the raw amino-acid sequence, 369 residues long: sn-glycerol-3-phosphate import ATP-binding protein UgpC (369 aa).

In terms of domain architecture, ABC transporter spans 4-235 (LSLRNVQKTY…PASTFVAGFI (232 aa)). 37–44 (GPSGCGKS) lines the ATP pocket.

Belongs to the ABC transporter superfamily. sn-glycerol-3-phosphate importer (TC 3.A.1.1.3) family. As to quaternary structure, the complex is composed of two ATP-binding proteins (UgpC), two transmembrane proteins (UgpA and UgpE) and a solute-binding protein (UgpB).

The protein localises to the cell inner membrane. The catalysed reaction is sn-glycerol 3-phosphate(out) + ATP + H2O = sn-glycerol 3-phosphate(in) + ADP + phosphate + H(+). In terms of biological role, part of the ABC transporter complex UgpBAEC involved in sn-glycerol-3-phosphate (G3P) import. Responsible for energy coupling to the transport system. This chain is sn-glycerol-3-phosphate import ATP-binding protein UgpC, found in Cupriavidus pinatubonensis (strain JMP 134 / LMG 1197) (Cupriavidus necator (strain JMP 134)).